The following is a 264-amino-acid chain: 3-methyl-2-oxobutanoate hydroxymethyltransferase (264 aa).

Mg(2+)-binding residues include aspartate 44 and aspartate 83. 3-methyl-2-oxobutanoate contacts are provided by residues 44–45 (DS), aspartate 83, and lysine 112. Position 114 (glutamate 114) interacts with Mg(2+). Glutamate 181 functions as the Proton acceptor in the catalytic mechanism.

The protein belongs to the PanB family. In terms of assembly, homodecamer; pentamer of dimers. Mg(2+) is required as a cofactor.

Its subcellular location is the cytoplasm. It carries out the reaction 3-methyl-2-oxobutanoate + (6R)-5,10-methylene-5,6,7,8-tetrahydrofolate + H2O = 2-dehydropantoate + (6S)-5,6,7,8-tetrahydrofolate. It participates in cofactor biosynthesis; coenzyme A biosynthesis. In terms of biological role, catalyzes the reversible reaction in which hydroxymethyl group from 5,10-methylenetetrahydrofolate is transferred onto alpha-ketoisovalerate to form ketopantoate. The chain is 3-methyl-2-oxobutanoate hydroxymethyltransferase from Pyrobaculum arsenaticum (strain DSM 13514 / JCM 11321 / PZ6).